A 357-amino-acid chain; its full sequence is tRNA/tmRNA (uracil-C(5))-methyltransferase (357 aa).

The S-adenosyl-L-methionine site is built by Gln-180, Tyr-209, Asn-214, Glu-230, and Asp-290. Cys-315 acts as the Nucleophile in catalysis. Glu-349 (proton acceptor) is an active-site residue.

It belongs to the class I-like SAM-binding methyltransferase superfamily. RNA M5U methyltransferase family. TrmA subfamily.

The enzyme catalyses uridine(54) in tRNA + S-adenosyl-L-methionine = 5-methyluridine(54) in tRNA + S-adenosyl-L-homocysteine + H(+). The catalysed reaction is uridine(341) in tmRNA + S-adenosyl-L-methionine = 5-methyluridine(341) in tmRNA + S-adenosyl-L-homocysteine + H(+). Dual-specificity methyltransferase that catalyzes the formation of 5-methyluridine at position 54 (m5U54) in all tRNAs, and that of position 341 (m5U341) in tmRNA (transfer-mRNA). In Campylobacter jejuni subsp. jejuni serotype O:2 (strain ATCC 700819 / NCTC 11168), this protein is tRNA/tmRNA (uracil-C(5))-methyltransferase.